Consider the following 500-residue polypeptide: Centrosomal protein of 57 kDa (500 aa).

The span at 1–17 (MAAASVSAASGSHLSNS) shows a compositional bias: low complexity. Disordered regions lie at residues 1 to 34 (MAAA…HSSS) and 43 to 62 (KPFL…LAYP). A compositionally biased stretch (polar residues) spans 18-34 (FAEPSRSNGSMVRHSSS). Phosphoserine occurs at positions 53 and 55. Positions 58-239 (TLAYPESNSR…KAAELQTGLE (182 aa)) are centrosome localization domain (CLD). 2 coiled-coil regions span residues 63 to 242 (ESNS…ETNR) and 392 to 492 (ELKD…NSLQ). The segment at 277 to 491 (GAQPHYRLCL…KDMQSIQNSL (215 aa)) is mediates interaction with microtubules. A compositionally biased stretch (basic and acidic residues) spans 434–450 (KKELKATKKTLDEERNS). A disordered region spans residues 434–472 (KKELKATKKTLDEERNSSSRSGITGTTNKKDFMKLRPGE). Residues 451 to 460 (SSRSGITGTT) are compositionally biased toward polar residues. The span at 461–471 (NKKDFMKLRPG) shows a compositional bias: basic and acidic residues.

This sequence belongs to the translokin family. In terms of assembly, homodimer and homooligomer. Interacts with microtubules. Interacts with FGF2 and RAP80. Does not interact with FGF1 or FGF2 isoform 24 kDa. Ubiquitous.

The protein localises to the nucleus. The protein resides in the cytoplasm. It is found in the cytoskeleton. It localises to the microtubule organizing center. Its subcellular location is the centrosome. Its function is as follows. Centrosomal protein which may be required for microtubule attachment to centrosomes. May act by forming ring-like structures around microtubules. Mediates nuclear translocation and mitogenic activity of the internalized growth factor FGF2, but that of FGF1. The protein is Centrosomal protein of 57 kDa (CEP57) of Homo sapiens (Human).